The chain runs to 309 residues: Protein FdhE (309 aa).

This sequence belongs to the FdhE family.

The protein localises to the cytoplasm. Its function is as follows. Necessary for formate dehydrogenase activity. This chain is Protein FdhE, found in Escherichia coli O127:H6 (strain E2348/69 / EPEC).